A 427-amino-acid chain; its full sequence is tRNA(Ile)-lysidine synthase (427 aa).

18 to 23 (SGGLDS) provides a ligand contact to ATP.

Belongs to the tRNA(Ile)-lysidine synthase family.

It is found in the cytoplasm. It carries out the reaction cytidine(34) in tRNA(Ile2) + L-lysine + ATP = lysidine(34) in tRNA(Ile2) + AMP + diphosphate + H(+). In terms of biological role, ligates lysine onto the cytidine present at position 34 of the AUA codon-specific tRNA(Ile) that contains the anticodon CAU, in an ATP-dependent manner. Cytidine is converted to lysidine, thus changing the amino acid specificity of the tRNA from methionine to isoleucine. In Pseudomonas putida (strain ATCC 47054 / DSM 6125 / CFBP 8728 / NCIMB 11950 / KT2440), this protein is tRNA(Ile)-lysidine synthase.